A 623-amino-acid polypeptide reads, in one-letter code: DEAD-box ATP-dependent RNA helicase 52C (623 aa).

Positions 1 to 120 (MATPSRTSWA…DGDAAAGAGD (120 aa)) are disordered. Residues 10–29 (ADVADADPAPAPAPAANGPA) are compositionally biased toward low complexity. Residues 54 to 69 (APPPSSSSSSAPPPRA) are compositionally biased toward pro residues. Over residues 70-83 (APGLLAPRPAAAGM) the composition is skewed to low complexity. The segment covering 84–97 (GRMGGGGGGGGFGG) has biased composition (gly residues). The Q motif signature appears at 155–183 (GTFAEIDLGQALNDNIRRCKYVRPTPVQR). The 187-residue stretch at 186-372 (IPISLAGRDL…SDFLENYIFL (187 aa)) folds into the Helicase ATP-binding domain. Residue 199 to 206 (AQTGSGKT) coordinates ATP. Residues 316–319 (DEAD) carry the DEAD box motif. Residues 399–550 (HLMDLLHAQR…EVPAWLSRYA (152 aa)) form the Helicase C-terminal domain. The disordered stretch occupies residues 553 to 595 (PSYGGGGGRNRRSGGGSRFGGRDFRRDSSSGRGGGDYYGGGSS). Positions 555 to 571 (YGGGGGRNRRSGGGSRF) are enriched in gly residues. Residues 572-581 (GGRDFRRDSS) are compositionally biased toward basic and acidic residues. Residues 583 to 595 (GRGGGDYYGGGSS) are compositionally biased toward gly residues.

This sequence belongs to the DEAD box helicase family. DDX3/DED1 subfamily.

It carries out the reaction ATP + H2O = ADP + phosphate + H(+). The sequence is that of DEAD-box ATP-dependent RNA helicase 52C from Oryza sativa subsp. japonica (Rice).